A 413-amino-acid chain; its full sequence is Exodeoxyribonuclease I (413 aa).

The 182-residue stretch at 12 to 193 (LFYDYETFGI…VSDVYATIEI (182 aa)) folds into the Exonuclease domain. Residues D15, E17, and D186 each contribute to the Mg(2+) site. A substrate-binding site is contributed by E17. The 148-residue stretch at 202 to 349 (PRLFDFFFKI…QNIKIIFSKN (148 aa)) folds into the ExoI SH3-like domain. The ExoI C-terminal domain maps to 350-413 (NNTNQFFNVD…RYRARNFFIH (64 aa)).

Monomer. Interacts with ssb (via C-terminus); this interaction stimulates the exonuclease activity by recruiting the enzyme to its substrate. Requires Mg(2+) as cofactor.

The enzyme catalyses Exonucleolytic cleavage in the 3'- to 5'-direction to yield nucleoside 5'-phosphates.. Functionally, degrades single-stranded DNA (ssDNA) in a highly processive manner. Also functions as a DNA deoxyribophosphodiesterase that releases deoxyribose-phosphate moieties following the cleavage of DNA at an apurinic/apyrimidinic (AP) site by either an AP endonuclease or AP lyase. The sequence is that of Exodeoxyribonuclease I (sbcB) from Buchnera aphidicola subsp. Acyrthosiphon pisum (strain APS) (Acyrthosiphon pisum symbiotic bacterium).